A 208-amino-acid chain; its full sequence is Putative ADP-ribose pyrophosphatase YjhB (208 aa).

Residues 69–195 (TPKADVRGAV…NTPSQLSMLF (127 aa)) form the Nudix hydrolase domain. The Nudix box motif lies at 100 to 121 (GFCEIGLSPAENVVKEIKEESG). Glu-115 and Glu-119 together coordinate Mg(2+).

Belongs to the Nudix hydrolase family. Mg(2+) serves as cofactor. The cofactor is Mn(2+).

In terms of biological role, probably mediates the hydrolysis of some nucleoside diphosphate derivatives. The polypeptide is Putative ADP-ribose pyrophosphatase YjhB (yjhB) (Bacillus subtilis (strain 168)).